A 130-amino-acid polypeptide reads, in one-letter code: MSTITKDQILEGVAALSVMEIVELISAMEEKFGVSAAAVAAGPAAAVAAGPAAAVEAAEEQTEFDVVLASFGENKVAVIKAVRGATGLGLKEAKDLVESAPAVLKEGVNKDEAETLKKSLEEAGASVEIK.

The protein belongs to the bacterial ribosomal protein bL12 family. As to quaternary structure, homodimer. Part of the ribosomal stalk of the 50S ribosomal subunit. Forms a multimeric L10(L12)X complex, where L10 forms an elongated spine to which 2 to 4 L12 dimers bind in a sequential fashion. Binds GTP-bound translation factors.

In terms of biological role, forms part of the ribosomal stalk which helps the ribosome interact with GTP-bound translation factors. Is thus essential for accurate translation. The chain is Large ribosomal subunit protein bL12 from Yersinia pestis bv. Antiqua (strain Angola).